A 27-amino-acid chain; its full sequence is DVPSANANANNQRTAAAKPQANAEASS.

The span at 1–17 (DVPSANANANNQRTAAA) shows a compositional bias: low complexity. The tract at residues 1-27 (DVPSANANANNQRTAAAKPQANAEASS) is disordered.

In terms of tissue distribution, main cells of the accessory glands of males (paragonial gland).

The protein resides in the secreted. Its function is as follows. Represses female sexual receptivity and stimulates oviposition. This peptide has a low activity. In Drosophila funebris (Fruit fly), this protein is Paragonial peptide PS-1 (PapC).